The primary structure comprises 473 residues: Zinc finger and SCAN domain-containing protein 21 (473 aa).

A Glycyl lysine isopeptide (Lys-Gly) (interchain with G-Cter in SUMO2) cross-link involves residue K27. Positions 45–127 constitute an SCAN box domain; the sequence is RQRFRQFGYH…TLLEDLEREL (83 aa). The segment at 127–167 is disordered; sequence LDEPGHQVSTPPNEQKPVWEKISSSGTAKESPSSMQPQPLE. Over residues 148–165 the composition is skewed to polar residues; that stretch reads ISSSGTAKESPSSMQPQP. Residues K221 and K232 each participate in a glycyl lysine isopeptide (Lys-Gly) (interchain with G-Cter in SUMO2) cross-link. The interval 244 to 272 is disordered; it reads LENEKGTKPPLQEAGSKKGRESVPTKPTP. Residues 258 to 272 are compositionally biased toward basic and acidic residues; it reads GSKKGRESVPTKPTP. 7 C2H2-type zinc fingers span residues 277–299, 305–327, 333–354, 360–382, 388–410, 416–438, and 444–466; these read YICA…RRTH, YVCT…YRTH, YDCK…QRMH, YQCK…YRIH, YQCN…QRLH, YKCK…HRIH, and YWCH…QRVH. Residue K349 forms a Glycyl lysine isopeptide (Lys-Gly) (interchain with G-Cter in SUMO2) linkage.

The protein belongs to the krueppel C2H2-type zinc-finger protein family.

Its subcellular location is the nucleus. Strong transcriptional activator. Plays an important role in spermatogenesis; essential for the progression of meiotic prophase I in spermatocytes. In Pan troglodytes (Chimpanzee), this protein is Zinc finger and SCAN domain-containing protein 21 (ZSCAN21).